A 474-amino-acid chain; its full sequence is tRNA-2-methylthio-N(6)-dimethylallyladenosine synthase (474 aa).

The region spanning 3–120 (KKLHIKTWGC…LPEMINSVRG (118 aa)) is the MTTase N-terminal domain. [4Fe-4S] cluster is bound by residues cysteine 12, cysteine 49, cysteine 83, cysteine 157, cysteine 161, and cysteine 164. The region spanning 143-375 (RAEGPTAFVS…QERINQQAMA (233 aa)) is the Radical SAM core domain. The TRAM domain occupies 378 to 441 (RRMLGTTQRI…PNSLRGKVVR (64 aa)).

It belongs to the methylthiotransferase family. MiaB subfamily. In terms of assembly, monomer. It depends on [4Fe-4S] cluster as a cofactor.

The protein resides in the cytoplasm. The catalysed reaction is N(6)-dimethylallyladenosine(37) in tRNA + (sulfur carrier)-SH + AH2 + 2 S-adenosyl-L-methionine = 2-methylsulfanyl-N(6)-dimethylallyladenosine(37) in tRNA + (sulfur carrier)-H + 5'-deoxyadenosine + L-methionine + A + S-adenosyl-L-homocysteine + 2 H(+). Catalyzes the methylthiolation of N6-(dimethylallyl)adenosine (i(6)A), leading to the formation of 2-methylthio-N6-(dimethylallyl)adenosine (ms(2)i(6)A) at position 37 in tRNAs that read codons beginning with uridine. The sequence is that of tRNA-2-methylthio-N(6)-dimethylallyladenosine synthase from Escherichia coli (strain SMS-3-5 / SECEC).